Here is a 452-residue protein sequence, read N- to C-terminus: Pup--protein ligase 1 (452 aa).

E9 provides a ligand contact to Mg(2+). Residue R53 participates in ATP binding. Y55 contributes to the Mg(2+) binding site. Residue D57 is the Proton acceptor of the active site. E63 is a binding site for Mg(2+). The ATP site is built by T66 and W419.

This sequence belongs to the Pup ligase/Pup deamidase family. Pup-conjugating enzyme subfamily.

The catalysed reaction is ATP + [prokaryotic ubiquitin-like protein]-L-glutamate + [protein]-L-lysine = ADP + phosphate + N(6)-([prokaryotic ubiquitin-like protein]-gamma-L-glutamyl)-[protein]-L-lysine.. Its pathway is protein degradation; proteasomal Pup-dependent pathway. It participates in protein modification; protein pupylation. In terms of biological role, catalyzes the covalent attachment of the prokaryotic ubiquitin-like protein modifier Pup to the proteasomal substrate proteins, thereby targeting them for proteasomal degradation. This tagging system is termed pupylation. The ligation reaction involves the side-chain carboxylate of the C-terminal glutamate of Pup and the side-chain amino group of a substrate lysine. The sequence is that of Pup--protein ligase 1 from Rhodococcus erythropolis (Arthrobacter picolinophilus).